Here is a 631-residue protein sequence, read N- to C-terminus: Probable glutamate--tRNA ligase, cytoplasmic (631 aa).

139 to 141 (RFP) serves as a coordination point for L-glutamate. The short motif at 144–153 (PSGFLHIGHI) is the 'HIGH' region element. Residue His149 coordinates ATP. Residues Asp173, 311–315 (YDFAC), and Arg329 each bind L-glutamate. ATP is bound by residues Glu332 and 367 to 371 (VLSKR). The 'KMSKS' region signature appears at 367–371 (VLSKR).

Belongs to the class-I aminoacyl-tRNA synthetase family. Glutamate--tRNA ligase type 2 subfamily.

Its subcellular location is the cytoplasm. The enzyme catalyses tRNA(Glu) + L-glutamate + ATP = L-glutamyl-tRNA(Glu) + AMP + diphosphate. The polypeptide is Probable glutamate--tRNA ligase, cytoplasmic (Enterocytozoon bieneusi (strain H348) (Microsporidian parasite)).